An 851-amino-acid polypeptide reads, in one-letter code: DNA mismatch repair protein MutS (851 aa).

602–609 is an ATP binding site; the sequence is GPNMSGKS.

The protein belongs to the DNA mismatch repair MutS family.

This protein is involved in the repair of mismatches in DNA. It is possible that it carries out the mismatch recognition step. This protein has a weak ATPase activity. The protein is DNA mismatch repair protein MutS of Streptococcus pyogenes serotype M28 (strain MGAS6180).